The chain runs to 745 residues: Cytoplasmic polyadenylation element-binding protein 3 (745 aa).

3 disordered regions span residues 1 to 45, 94 to 180, and 204 to 283; these read MNLN…KSPT, VGSK…TNNS, and NKAN…FGEL. Basic and acidic residues predominate over residues 162–175; the sequence is LNFERDAEQKKDST. Residues 219 to 229 show a composition bias toward polar residues; the sequence is ETPTDSPQKGF. The span at 230-240 shows a compositional bias: low complexity; sequence SSSTESSPSDS. Residues 241–255 are compositionally biased toward polar residues; that stretch reads MNQFPSREHFTSANE. Positions 264–276 are enriched in basic and acidic residues; that stretch reads FQQEHGNKNRDSD. The 23-residue stretch at 297-319 folds into the RRM domain; that stretch reads IFVGGVPWDITEAALKDSFGEFG.

In terms of biological role, cytoplasmic polyadenylation element binding protein that binds to and regulates the translation of specific mRNAs. May not be required for oogenesis. This Caenorhabditis elegans protein is Cytoplasmic polyadenylation element-binding protein 3 (cpb-3).